We begin with the raw amino-acid sequence, 126 residues long: Ribosome-binding factor A (126 aa).

This sequence belongs to the RbfA family. In terms of assembly, monomer. Binds 30S ribosomal subunits, but not 50S ribosomal subunits or 70S ribosomes.

The protein resides in the cytoplasm. Its function is as follows. One of several proteins that assist in the late maturation steps of the functional core of the 30S ribosomal subunit. Associates with free 30S ribosomal subunits (but not with 30S subunits that are part of 70S ribosomes or polysomes). Required for efficient processing of 16S rRNA. May interact with the 5'-terminal helix region of 16S rRNA. This is Ribosome-binding factor A from Nitrosospira multiformis (strain ATCC 25196 / NCIMB 11849 / C 71).